Reading from the N-terminus, the 208-residue chain is V-type ATP synthase subunit D (208 aa).

This sequence belongs to the V-ATPase D subunit family.

Functionally, produces ATP from ADP in the presence of a proton gradient across the membrane. The chain is V-type ATP synthase subunit D from Streptococcus pyogenes serotype M1.